The following is a 664-amino-acid chain: Probable 3',5'-cyclic phosphodiesterase pde-1 (664 aa).

2 disordered regions span residues 24–60 (TSSASEEHGDSDKKLLSVQLITPRDEEEQTSSRSIKI) and 113–142 (RNQKEKSNSDDNCQEKEPTSPSSSRKKSYD). Composition is skewed to basic and acidic residues over residues 28-38 (SEEHGDSDKKL) and 114-130 (NQKEKSNSDDNCQEKEP). Positions 256–634 (VQCPIPPEIA…AHWKERAAKE (379 aa)) constitute a PDEase domain. His-333 acts as the Proton donor in catalysis. Residues His-337, His-373, Asp-374, and Asp-480 each contribute to the a divalent metal cation site. Disordered regions lie at residues 564–597 (DSLFPPSVDGGDDKSPSNALSPLPDLRNSSTSPS) and 630–664 (RAAKEEEERKIKEAAEAEAAAKQVEENKENGVTTN). Residues 630–644 (RAAKEEEERKIKEAA) are compositionally biased toward basic and acidic residues.

Belongs to the cyclic nucleotide phosphodiesterase family. As to quaternary structure, interacts with cmd-1 in the presence of Ca(2+). It depends on a divalent metal cation as a cofactor. As to expression, expressed in AFD thermosensory neurons.

It carries out the reaction a nucleoside 3',5'-cyclic phosphate + H2O = a nucleoside 5'-phosphate + H(+). Its function is as follows. Redundantly with pde-5, plays a role in the AFD thermosensory neurons to regulate microvilli receptive ending morphology, possibly by regulating cGMP levels. In Caenorhabditis elegans, this protein is Probable 3',5'-cyclic phosphodiesterase pde-1 (pde-1).